A 251-amino-acid chain; its full sequence is 5'-nucleotidase SurE (251 aa).

4 residues coordinate a divalent metal cation: Asp8, Asp9, Ser40, and Asn95.

This sequence belongs to the SurE nucleotidase family. It depends on a divalent metal cation as a cofactor.

Its subcellular location is the cytoplasm. It catalyses the reaction a ribonucleoside 5'-phosphate + H2O = a ribonucleoside + phosphate. Nucleotidase that shows phosphatase activity on nucleoside 5'-monophosphates. The chain is 5'-nucleotidase SurE from Maridesulfovibrio salexigens (strain ATCC 14822 / DSM 2638 / NCIMB 8403 / VKM B-1763) (Desulfovibrio salexigens).